The primary structure comprises 169 residues: Peptide methionine sulfoxide reductase MsrA (169 aa).

The active site involves Cys10.

The protein belongs to the MsrA Met sulfoxide reductase family.

It carries out the reaction L-methionyl-[protein] + [thioredoxin]-disulfide + H2O = L-methionyl-(S)-S-oxide-[protein] + [thioredoxin]-dithiol. The enzyme catalyses [thioredoxin]-disulfide + L-methionine + H2O = L-methionine (S)-S-oxide + [thioredoxin]-dithiol. Its function is as follows. Has an important function as a repair enzyme for proteins that have been inactivated by oxidation. Catalyzes the reversible oxidation-reduction of methionine sulfoxide in proteins to methionine. The protein is Peptide methionine sulfoxide reductase MsrA of Streptococcus equi subsp. zooepidemicus (strain H70).